The following is a 185-amino-acid chain: Elongation factor P (185 aa).

It belongs to the elongation factor P family.

The protein resides in the cytoplasm. It participates in protein biosynthesis; polypeptide chain elongation. In terms of biological role, involved in peptide bond synthesis. Stimulates efficient translation and peptide-bond synthesis on native or reconstituted 70S ribosomes in vitro. Probably functions indirectly by altering the affinity of the ribosome for aminoacyl-tRNA, thus increasing their reactivity as acceptors for peptidyl transferase. This is Elongation factor P from Mesomycoplasma hyopneumoniae (strain 232) (Mycoplasma hyopneumoniae).